The chain runs to 44 residues: Protein PsbN (44 aa).

The chain crosses the membrane as a helical span at residues 6–26 (FFYGVFLWCLLISVTGYSIYI).

It belongs to the PsbN family.

Its subcellular location is the plastid. The protein resides in the chloroplast thylakoid membrane. Its function is as follows. May play a role in photosystem I and II biogenesis. This is Protein PsbN from Ostreococcus tauri.